The following is a 1392-amino-acid chain: DNA-directed RNA polymerase subunit beta'' (1392 aa).

Cys-224, Cys-295, Cys-302, and Cys-305 together coordinate Zn(2+).

This sequence belongs to the RNA polymerase beta' chain family. RpoC2 subfamily. In terms of assembly, in plastids the minimal PEP RNA polymerase catalytic core is composed of four subunits: alpha, beta, beta', and beta''. When a (nuclear-encoded) sigma factor is associated with the core the holoenzyme is formed, which can initiate transcription. Requires Zn(2+) as cofactor.

It localises to the plastid. Its subcellular location is the chloroplast. The enzyme catalyses RNA(n) + a ribonucleoside 5'-triphosphate = RNA(n+1) + diphosphate. In terms of biological role, DNA-dependent RNA polymerase catalyzes the transcription of DNA into RNA using the four ribonucleoside triphosphates as substrates. The chain is DNA-directed RNA polymerase subunit beta'' from Solanum lycopersicum (Tomato).